We begin with the raw amino-acid sequence, 348 residues long: MLPIRDCVQQTPGYVPGEQPQTTDYIKLNTNENPYAPPDEIFNNLEEELKKVRLYPDPVSTKLRKAAGEVFGFSYEQILAGNGSDDILNIALRTFVNPGETVAFLDLTYSLYETIAKVHGATIQTISTNENFELDSPLICPEAKLIFVASPNPPLGKHLNRQYLKETCEQATGVVLIDEAYVDFSDEDHWDFIKEYDNVIVSRTMSKSYSLAGMRVGFGISSREIIEQMNKVRDSYNLDRIAQTLGANCFQFQDYFQSIWQKVRTTRNRLIASLRNLDFFVFDSDANFVLASPQWIEASDLYTKLKERKVLVRYFKHPRISNYIRITVGTDAEIDRLLEVIKQLKNES.

Lysine 207 is modified (N6-(pyridoxal phosphate)lysine).

It belongs to the class-II pyridoxal-phosphate-dependent aminotransferase family. Histidinol-phosphate aminotransferase subfamily. In terms of assembly, homodimer. Requires pyridoxal 5'-phosphate as cofactor.

The enzyme catalyses L-histidinol phosphate + 2-oxoglutarate = 3-(imidazol-4-yl)-2-oxopropyl phosphate + L-glutamate. It functions in the pathway amino-acid biosynthesis; L-histidine biosynthesis; L-histidine from 5-phospho-alpha-D-ribose 1-diphosphate: step 7/9. This Crocosphaera subtropica (strain ATCC 51142 / BH68) (Cyanothece sp. (strain ATCC 51142)) protein is Histidinol-phosphate aminotransferase.